Here is a 393-residue protein sequence, read N- to C-terminus: Sex hormone-binding globulin (393 aa).

The N-terminal stretch at Met1 to Gln27 is a signal peptide. 2 consecutive Laminin G-like domains span residues Val35–Cys208 and Gly215–Cys381. Intrachain disulfides connect Cys183/Cys208 and Cys353/Cys381. 2 N-linked (GlcNAc...) asparagine glycosylation sites follow: Asn371 and Asn387.

Homodimer.

The protein resides in the secreted. In terms of biological role, functions as an androgen transport protein, but may also be involved in receptor mediated processes. Each dimer binds one molecule of steroid. Specific for 5-alpha-dihydrotestosterone, testosterone, and 17-beta-estradiol. Regulates the plasma metabolic clearance rate of steroid hormones by controlling their plasma concentration. The sequence is that of Sex hormone-binding globulin (SHBG) from Crocuta crocuta (Spotted hyena).